Consider the following 397-residue polypeptide: Elongation factor Tu (397 aa).

Positions 10 to 207 (LPHVNVGTIG…TLDAYIPEPV (198 aa)) constitute a tr-type G domain. The segment at 19–26 (GHVDHGKT) is G1. 19–26 (GHVDHGKT) provides a ligand contact to GTP. Thr-26 contributes to the Mg(2+) binding site. The segment at 60-64 (GITIN) is G2. The G3 stretch occupies residues 81–84 (DCPG). GTP is bound by residues 81–85 (DCPGH) and 136–139 (NKAD). Residues 136-139 (NKAD) are G4. The tract at residues 174-176 (SAR) is G5.

It belongs to the TRAFAC class translation factor GTPase superfamily. Classic translation factor GTPase family. EF-Tu/EF-1A subfamily. In terms of assembly, monomer.

The protein resides in the cytoplasm. It catalyses the reaction GTP + H2O = GDP + phosphate + H(+). Functionally, GTP hydrolase that promotes the GTP-dependent binding of aminoacyl-tRNA to the A-site of ribosomes during protein biosynthesis. This Pseudomonas entomophila (strain L48) protein is Elongation factor Tu.